We begin with the raw amino-acid sequence, 1712 residues long: Latent-transforming growth factor beta-binding protein 1 (1712 aa).

The signal sequence occupies residues 1-23 (MAGAWLRWGLLLWAGLLAWSAHG). The interval 65-118 (TAASSRALAGPPAERTRRTSQPGGAALPGLRSPLPPEPARPGGPSRQLHSKAGA) is disordered. An EGF-like 1 domain is found at 181-213 (TKPSCVPPCQNGGMCLRPQLCVCKPGSKGKACE). 3 disulfides stabilise this stretch: C185–C195, C189–C201, and C203–C212. N-linked (GlcNAc...) asparagine glycosylation is found at N339 and N370. The EGF-like 2 domain maps to 391–423 (RVVICHLPCMNGGQCSSRDKCQCPPNFTGKLCQ). 6 cysteine pairs are disulfide-bonded: C395/C405, C399/C411, C413/C422, C551/C573, C560/C586, and C574/C589. An N-linked (GlcNAc...) asparagine glycan is attached at N416. Residues 549–601 (GRCFQETIGSQCGKALPGLSKQEDCCGTVGTSWGFNKCQKCPKKQSYHGYTQM) form the TB 1 domain. N-linked (GlcNAc...) asparagine glycosylation is present at N612. One can recognise an EGF-like 3; calcium-binding domain in the interval 618–658 (DINECQLQGVCPNGECLNTMGSYRCSCKMGFGPDPTFSSCV). Cystine bridges form between C622–C633, C628–C642, C644–C657, C671–C694, C681–C706, C695–C709, and C696–C721. An O-linked (Glc) serine glycan is attached at S639. Residues 669–721 (GPCYRLVSPGRHCMHPLSVHLTKQICCCSVGKAWGPHCEKCPLPGTAAFKEIC) form the TB 2 domain. Residues 753–799 (NTQPVAKSTHPPPLPAKEEPVEALTSSWEHGPRGAEPEVVTAPPEKE) are disordered. O-linked (GalNAc...) threonine glycosylation is found at T761 and T793. One can recognise an EGF-like 4; calcium-binding domain in the interval 865–906 (EINECTVNPDICGAGHCINLPVRYTCICYEGYKFSEQLRKCV). Intrachain disulfides connect C869–C881, C876–C890, C892–C905, C911–C923, C918–C932, C934–C947, C953–C964, C959–C973, C976–C988, C994–C1005, C1000–C1014, C1017–C1028, C1034–C1045, C1040–C1054, C1056–C1069, C1075–C1086, C1081–C1095, C1097–C1110, C1116–C1127, C1122–C1136, C1138–C1151, C1157–C1169, C1164–C1178, C1180–C1192, C1198–C1210, C1204–C1219, C1221–C1234, C1240–C1252, C1246–C1261, C1263–C1276, C1282–C1294, C1289–C1303, C1305–C1319, C1340–C1363, C1350–C1375, C1364–C1380, and C1365–C1392. One can recognise an EGF-like 5; calcium-binding domain in the interval 907–948 (DIDECAQVRHLCSQGRCENTEGSFLCVCPAGFMASEEGTNCI). A glycan (O-linked (Glc) serine) is linked at S929. Residues 949–989 (DVDECLRPDMCRDGRCINTAGAFRCEYCDSGYRMSRRGYCE) enclose the EGF-like 6; calcium-binding domain. The residue at position 966 (N966) is a (3R)-3-hydroxyasparagine. Residues 990 to 1029 (DIDECLKPSTCPEEQCVNTPGSYQCVPCTEGFRGWNGQCL) form the EGF-like 7; calcium-binding domain. An O-linked (Glc) serine glycan is attached at S1011. The region spanning 1030-1070 (DVDECLQPKVCTNGSCTNLEGSYMCSCHRGYSPTPDHRHCQ) is the EGF-like 8; calcium-binding domain. N1042 is a glycosylation site (N-linked (GlcNAc...) asparagine). S1051 is a glycosylation site (O-linked (Glc) serine). One can recognise an EGF-like 9; calcium-binding domain in the interval 1071 to 1111 (DIDECQQGNLCMNGQCRNTDGSFRCTCGQGYQLSAAKDQCE). The 41-residue stretch at 1112 to 1152 (DIDECEHHHLCSHGQCRNTEGSFQCVCNQGYRASVLGDHCE) folds into the EGF-like 10; calcium-binding domain. N1129 is modified ((3R)-3-hydroxyasparagine). A glycan (O-linked (Glc) serine) is linked at S1133. Residues 1153 to 1193 (DINECLEDSSVCQGGDCINTAGSYDCTCPDGFQLNDNKGCQ) form the EGF-like 11; calcium-binding domain. The region spanning 1194–1235 (DINECAQPGLCGSHGECLNTQGSFHCVCEQGFSISADGRTCE) is the EGF-like 12; calcium-binding domain. The O-linked (Glc) serine glycan is linked to S1216. Residues 1236-1277 (DIDECVNNTVCDSHGFCDNTAGSFRCLCYQGFQAPQDGQGCV) form the EGF-like 13; calcium-binding domain. N1242 carries an N-linked (GlcNAc...) asparagine glycan. One can recognise an EGF-like 14; calcium-binding domain in the interval 1278–1320 (DVNECELLSGVCGEAFCENVEGSFLCVCADENQEYSPMTGQCR). Positions 1335-1402 (EEKKECYYNL…PRGKGLVPAG (68 aa)) are 8-Cys3 region. The TB 3 domain occupies 1338 to 1392 (KECYYNLNDASLCDNVLAPNVTKQECCCTSGAGWGDNCEIFPCPVQGTAEFTEMC). N1357 is a glycosylation site (N-linked (GlcNAc...) asparagine). S1405 carries the phosphoserine modification. Residues 1415–1457 (DADECLLFGEEICKNGYCLNTQPGYECYCKQGTYYDPVKLQCF) enclose the EGF-like 15; calcium-binding domain. Intrachain disulfides connect C1419/C1432, C1427/C1441, C1443/C1456, C1462/C1473, C1468/C1482, C1484/C1497, C1517/C1541, C1527/C1553, C1542/C1556, and C1543/C1568. The region spanning 1458–1498 (DMDECQDPNSCIDGQCVNTEGSYNCFCTHPMVLDASEKRCV) is the EGF-like 16; calcium-binding domain. O-linked (Glc) serine glycosylation is present at S1479. The tract at residues 1498-1712 (VQPTESNEQI…LNLDKESDLE (215 aa)) is C-terminal domain. Positions 1515-1568 (DLCWEHLSEEYVCSRPLVGKQTTYTECCCLYGEAWGMQCALCPMKDSDDYAQLC) constitute a TB 4 domain. 2 positions are modified to phosphoserine: S1588 and S1607. Residues 1612 to 1652 (QAEECGILNGCENGRCVRVQEGYTCDCFDGYHLDMAKMTCV) enclose the EGF-like 17 domain. Cystine bridges form between C1616–C1627, C1622–C1636, C1638–C1651, C1657–C1672, C1667–C1681, and C1683–C1696. The EGF-like 18; calcium-binding domain occupies 1653–1697 (DVNECSELNNRMSLCKNAKCINTEGSYKCLCLPGYIPSDKPNYCT). O-linked (Glc) serine glycosylation occurs at S1678.

This sequence belongs to the LTBP family. In terms of assembly, interacts with TGFB1; associates via disulfide bonds with the Latency-associated peptide chain (LAP) regulatory chain of TGFB1, leading to regulate activation of TGF-beta-1. LTBP1 does not bind directly to TGF-beta-1, the active chain of TGFB1. Interacts (via C-terminal domain) with FBN1 (via N-terminal domain). Interacts with FBN2. Interacts with ADAMTSL2. Interacts with EFEMP2. Contains hydroxylated asparagine residues. In terms of processing, two intrachain disulfide bonds from the TB3 domain are rearranged upon TGFB1 binding, and form interchain bonds with TGFB1 propeptide, anchoring it to the extracellular matrix. Post-translationally, O-glycosylated on serine residues by POGLUT2 and POGLUT3.

Its subcellular location is the secreted. It localises to the extracellular space. The protein resides in the extracellular matrix. In terms of biological role, key regulator of transforming growth factor beta (TGFB1, TGFB2 and TGFB3) that controls TGF-beta activation by maintaining it in a latent state during storage in extracellular space. Associates specifically via disulfide bonds with the Latency-associated peptide (LAP), which is the regulatory chain of TGF-beta, and regulates integrin-dependent activation of TGF-beta. Outcompeted by LRRC32/GARP for binding to LAP regulatory chain of TGF-beta. This is Latent-transforming growth factor beta-binding protein 1 from Mus musculus (Mouse).